The sequence spans 523 residues: Jerky protein homolog-like (523 aa).

The region spanning 1–52 is the HTH psq-type domain; that stretch reads MSGKRKRVVLTIKDKLDIIKKLEDGGSSKQLAVIYGIGETTVRDIRKNKEKI. 2 consecutive DNA-binding regions (H-T-H motif) follow at residues 28 to 48 and 100 to 132; these read SKQLAVIYGIGETTVRDIRKN and PICAKRAEFFFYALGMDGDFNPSAGWLTRFKQR. In terms of domain architecture, HTH CENPB-type spans 67-139; sequence KRKSMKPSMY…KQRHSIREIN (73 aa). The DDE-1 domain occupies 168–385; sequence LQPEQIYNAD…VKPVTISRAW (218 aa).

The protein belongs to the tigger transposable element derived protein family.

The protein resides in the nucleus. The chain is Jerky protein homolog-like (Jrkl) from Mus musculus (Mouse).